We begin with the raw amino-acid sequence, 508 residues long: Pyruvate kinase, cytosolic isozyme (508 aa).

Position 48 (Arg48) interacts with substrate. Residues Asn50, Ser52, Asp82, and Thr83 each contribute to the K(+) site. Residue 50–53 (NFSH) coordinates ATP. Residues Arg89 and Lys174 each coordinate ATP. Glu240 lines the Mg(2+) pocket. Substrate-binding residues include Gly263, Asp264, and Thr296. Position 264 (Asp264) interacts with Mg(2+).

It belongs to the pyruvate kinase family. As to quaternary structure, homotetramer. Mg(2+) serves as cofactor. Requires K(+) as cofactor.

The protein localises to the cytoplasm. The catalysed reaction is pyruvate + ATP = phosphoenolpyruvate + ADP + H(+). The protein operates within carbohydrate degradation; glycolysis; pyruvate from D-glyceraldehyde 3-phosphate: step 5/5. This is Pyruvate kinase, cytosolic isozyme from Nicotiana tabacum (Common tobacco).